A 312-amino-acid chain; its full sequence is Glyoxylate/hydroxypyruvate reductase A (312 aa).

Arginine 227 is a catalytic residue. Histidine 275 (proton donor) is an active-site residue.

The protein belongs to the D-isomer specific 2-hydroxyacid dehydrogenase family. GhrA subfamily.

The protein localises to the cytoplasm. The catalysed reaction is glycolate + NADP(+) = glyoxylate + NADPH + H(+). The enzyme catalyses (R)-glycerate + NAD(+) = 3-hydroxypyruvate + NADH + H(+). It catalyses the reaction (R)-glycerate + NADP(+) = 3-hydroxypyruvate + NADPH + H(+). In terms of biological role, catalyzes the NADPH-dependent reduction of glyoxylate and hydroxypyruvate into glycolate and glycerate, respectively. The sequence is that of Glyoxylate/hydroxypyruvate reductase A from Escherichia coli (strain SMS-3-5 / SECEC).